Here is an 862-residue protein sequence, read N- to C-terminus: Fork head protein homolog 2 (862 aa).

Residues 83 to 152 (VSIGRNTDPL…NGAKVNFQRT (70 aa)) enclose the FHA domain. Residues 339-430 (VKPPHSYATM…QQEFLNKWNT (92 aa)) constitute a DNA-binding region (fork-head). 4 disordered regions span residues 498–528 (PSKG…QEQR), 611–663 (SDSA…GTTT), 698–730 (PERG…LQTS), and 750–846 (ESNN…ANAK). A compositionally biased stretch (low complexity) spans 504-520 (PASQQSQPPVSHQNQSQ). The span at 611–644 (SDSADKSTNNNGGTKMNLPAISTSSLDENGNLEP) shows a compositional bias: polar residues. Residues 645–655 (TTTTSSGNSNS) show a composition bias toward low complexity. Position 708 is a phosphoserine (S708). The span at 712 to 726 (SNSNNTNNNGANNSN) shows a compositional bias: low complexity. Composition is skewed to polar residues over residues 750–770 (ESNN…NVKS) and 778–788 (LQFSSTNNTPA). Basic and acidic residues predominate over residues 804-829 (IKAKENENATSEKDSDSNSNDLETKD). A compositionally biased stretch (polar residues) spans 830 to 844 (INSSPLKNQGGSTAN). A phosphoserine mark is found at S832 and S833.

Interacts with MCM1. Interacts with NDD1. Interacts with the origin recognition complex (ORC) composed of ORC1 to ORC6.

It is found in the nucleus. Its subcellular location is the cytoplasm. The protein resides in the cytosol. Transcription factor that regulates the expression of the CLB2 cluster of genes during the G2/M phase of the mitotic cell cycle. The CLB2 cluster of genes includes mitotic regulators such as CLB1, CLB2, CDC5 and CDC20 as well as SWI5 and ACE2, transcription factors required for the subsequent temporal wave of cell cycle regulated gene expression in the M/G1 phase interval. Involved in HMRa silencing. FKH1 and FKH2 associate with the coding regions of active genes and influence, in opposing ways, transcriptional elongation and termination, and coordinate early transcription elongation and pre-mRNA processing. Both FKH1 and FKH2 play a role as regulators of lifespan in collaboration with the anaphase-promoting complex (APC), likely through combined regulation of stress response, genomic stability, and cell cycle regulation. FKH1 and FKH2 function also in controlling yeast cell morphology by preventing preudohyphal growth. Acts as a rate-limiting replication origin activator via its interaction with the origin recognition complex (ORC). This is Fork head protein homolog 2 from Saccharomyces cerevisiae (strain ATCC 204508 / S288c) (Baker's yeast).